The following is a 218-amino-acid chain: Octanoyltransferase (218 aa).

The BPL/LPL catalytic domain maps to 31–206; sequence EETPDEVWLV…ELVNLLGYEQ (176 aa). Residues 70-77, 137-139, and 150-152 each bind substrate; these read RGGQVTYH, SLG, and GLA. C168 serves as the catalytic Acyl-thioester intermediate.

Belongs to the LipB family.

It localises to the cytoplasm. It catalyses the reaction octanoyl-[ACP] + L-lysyl-[protein] = N(6)-octanoyl-L-lysyl-[protein] + holo-[ACP] + H(+). It functions in the pathway protein modification; protein lipoylation via endogenous pathway; protein N(6)-(lipoyl)lysine from octanoyl-[acyl-carrier-protein]: step 1/2. Catalyzes the transfer of endogenously produced octanoic acid from octanoyl-acyl-carrier-protein onto the lipoyl domains of lipoate-dependent enzymes. Lipoyl-ACP can also act as a substrate although octanoyl-ACP is likely to be the physiological substrate. The protein is Octanoyltransferase of Vibrio vulnificus (strain YJ016).